The chain runs to 207 residues: Large ribosomal subunit protein uL3c (207 aa).

The segment at isoleucine 115–threonine 151 is disordered.

This sequence belongs to the universal ribosomal protein uL3 family. As to quaternary structure, part of the 50S ribosomal subunit.

It is found in the plastid. The protein resides in the chloroplast. Its function is as follows. One of the primary rRNA binding proteins, it binds directly near the 3'-end of the 23S rRNA, where it nucleates assembly of the 50S subunit. The chain is Large ribosomal subunit protein uL3c (rpl3) from Emiliania huxleyi (Coccolithophore).